Here is a 314-residue protein sequence, read N- to C-terminus: Protein ATP1B4 (314 aa).

The segment covering 1–17 (MATTAGEQANYLQSADS) has biased composition (polar residues). The disordered stretch occupies residues 1–37 (MATTAGEQANYLQSADSMSDGRQHHPEEAGEKKQEEQ). At 1–69 (MATTAGEQAN…VLGRDKKSWA (69 aa)) the chain is on the cytoplasmic side. Positions 19-37 (SDGRQHHPEEAGEKKQEEQ) are enriched in basic and acidic residues. Residues 70-90 (LILLFYFILYCFLAGLFALCI) form a helical membrane-spanning segment. Residues 91–314 (YGLLATISPY…GRVAFTLHIG (224 aa)) are Extracellular-facing. Residues Cys-160 and Cys-179 are joined by a disulfide bond. The N-linked (GlcNAc...) asparagine glycan is linked to Asn-188. 2 cysteine pairs are disulfide-bonded: Cys-189/Cys-205 and Cys-228/Cys-287. Asn-264 carries N-linked (GlcNAc...) asparagine glycosylation.

The protein belongs to the X(+)/potassium ATPases subunit beta family. In terms of assembly, composed of two subunits: alpha (catalytic) and beta (accessory). Glycosylated. As to expression, expressed in skeletal muscle, liver, lung, kidney, heart, brain and skin.

It localises to the membrane. Its function is as follows. This is the non-catalytic component of the active enzyme, which catalyzes the hydrolysis of ATP coupled with the exchange of Na(+) and K(+) ions across the plasma membrane. This chain is Protein ATP1B4 (atp1b4), found in Xenopus laevis (African clawed frog).